The following is an 895-amino-acid chain: MSAETPITLNMDTQDLQIQTFTVEKLLEPLIIQVTTLVNCPQNPSNRKKGRSKRARVLLASVEEATWNLLDKGEMIAKEATVLKEELAAALQEVRKESKALKVSAERFTDDPCYLPKREAVVQAARALLAAVTRLLVLADMIDVMCLLQHVSSFQRTFESLKNVSNKSDLQRTYQKLGKELESLDYLAFKRQQDLKSPSQRDEIAGARATLKENSPLLHSICSACLEHSDVASLKASKDTVCEEIQNALDVISNASQGIQNAPAPPEPQAATLGSAFDELENLIVLNPLTVTEEDVRPSLEKRLEAIISGAALLADSSCTRDLHRERIIAECNAIRQALQDLLTEYMSNTGKTERSNTLNTAIVNMSKKTRDLRRQLRKAIIDHISDSFLDTTVPLLVLIEAAKNGRVKEIKDYAAIFHEHTGRLVEVANLACSMSTNEDGIKIVRIAANHLETLCPQIINAALALASRPKSQVVKNTMEMYKRTWEHYIHVLTEAVDDITSIDDFLAVSESHILEDVNKCIIALRDQDADNLDRAAGAIRGRAARVAHIVAGEMDSYEPGAYTEGVMRNVNFLTSTVIPEFVTQVNVALDALSKNSLTALDDNQFVDISKKIYDTIHDIRCSVMMIRTPEELEDVSDLEDDHEVRSHTSIQTEGKTDRAKMTQLPEAEKEKIAEQVADFKKVKSKLDAEIEIWDDTSNDIIVLAKKMCMIMMEMTDFTRGKGPLKHTTDVIYAAKMISESGSRMDVLARQIANQCPDPPCKQDLLAYLEQIKFYSHQLKICSQVKAEIQNLGGELIVSALDSVTSLIQAAKNLMNAVVQTVKMSYIASTKIIRIQSSAGPRHPVVMWRMKAPAKKPLIKREKPEETWAAVRRGSAKKKIHPVQVMSEFRGRQVY.

Residues 74 to 107 (EMIAKEATVLKEELAAALQEVRKESKALKVSAER) adopt a coiled-coil conformation. Phosphoserine is present on Ser-160. Positions 325–379 (RERIIAECNAIRQALQDLLTEYMSNTGKTERSNTLNTAIVNMSKKTRDLRRQLRK) form a coiled coil. Thr-361 is subject to Phosphothreonine. Residues 635-660 (DVSDLEDDHEVRSHTSIQTEGKTDRA) form a disordered region. Residues Ser-637 and Ser-647 each carry the phosphoserine modification. The residue at position 649 (Thr-649) is a Phosphothreonine.

It belongs to the vinculin/alpha-catenin family. Interacts with CTNNB1. Interacts with PKP2. As to expression, expressed in heart (at protein level).

Its subcellular location is the cytoplasm. The protein resides in the cytoskeleton. The protein localises to the cell junction. It is found in the desmosome. Functionally, may be involved in formation of stretch-resistant cell-cell adhesion complexes. The chain is Catenin alpha-3 from Mus musculus (Mouse).